Here is a 354-residue protein sequence, read N- to C-terminus: Neutral protease 2 homolog AN7962 (354 aa).

The N-terminal stretch at 1–19 (MKFIAPIALLGMFQAASAS) is a signal peptide. Positions 20-178 (PVDIKTSNAG…GAQLSKLSKR (159 aa)) are excised as a propeptide. 2 cysteine pairs are disulfide-bonded: Cys184-Cys255 and Cys262-Cys280. His305 contacts Zn(2+). Glu306 is an active-site residue. Positions 309 and 320 each coordinate Zn(2+).

Belongs to the peptidase M35 family. Requires Zn(2+) as cofactor.

Its subcellular location is the secreted. It carries out the reaction Preferential cleavage of bonds with hydrophobic residues in P1'. Also 3-Asn-|-Gln-4 and 8-Gly-|-Ser-9 bonds in insulin B chain.. Functionally, secreted metalloproteinase that allows assimilation of proteinaceous substrates. Shows high activities on basic nuclear substrates such as histone and protamine. The sequence is that of Neutral protease 2 homolog AN7962 from Emericella nidulans (strain FGSC A4 / ATCC 38163 / CBS 112.46 / NRRL 194 / M139) (Aspergillus nidulans).